Reading from the N-terminus, the 293-residue chain is MTAQILDGKATAAAIKSDLTVRVAALKAQGITPGLGTLLVGDDPGSRWYVNGKHRDCAQVGIGSIQRELPDTATQEEIEEVVRELNANPECTGYIVQLPLPKGIDTNRVLELMDPEKDADGLHPMSLGRLVLNETGPLPCTPQGVVQLLRAHGVEINGAHVVVVGRGVTIGRSIPLLLTRKSENATVTQCHTGTRDLSSHLRQADIIVAAAGVQHLIKPEDVKPGAAVLDVGVSRDADGKIVGDVHPGVREVAAWVAPNPGGVGPMTRAQLLVNVVEAAERAAAEAADAAAAG.

Residues 165–167 (GRG), T192, and V233 contribute to the NADP(+) site.

The protein belongs to the tetrahydrofolate dehydrogenase/cyclohydrolase family. As to quaternary structure, homodimer.

The catalysed reaction is (6R)-5,10-methylene-5,6,7,8-tetrahydrofolate + NADP(+) = (6R)-5,10-methenyltetrahydrofolate + NADPH. It catalyses the reaction (6R)-5,10-methenyltetrahydrofolate + H2O = (6R)-10-formyltetrahydrofolate + H(+). It participates in one-carbon metabolism; tetrahydrofolate interconversion. Functionally, catalyzes the oxidation of 5,10-methylenetetrahydrofolate to 5,10-methenyltetrahydrofolate and then the hydrolysis of 5,10-methenyltetrahydrofolate to 10-formyltetrahydrofolate. In Streptomyces griseus subsp. griseus (strain JCM 4626 / CBS 651.72 / NBRC 13350 / KCC S-0626 / ISP 5235), this protein is Bifunctional protein FolD.